The primary structure comprises 483 residues: MSRFIDRVVLHVSAGKGGNGCASVHREKFKPLGGPDGANGGRGGDVILVVDENIHTLLDFHFHPNAKATNGKQGAGSNREGANGEDLILKVPDGTVVLDTDGNVLADLVGVGSRYDAAQGGRGGLGNAALASKARKAPGFALLGEDGVERDLVLELKSVADVGLLGFPSAGKSSLVSVLSAAKPKIADYPFTTLVPNLGVVSSGDTTFTVADVPGLIPGASEGRGLGLDFLRHIERCAVLAHVIDCATLDPGRDPISDIDALEAELAAYTPALSGDSGLGDLDKRPRVVILNKTDVPEAAELAEMVTPEIEARGWPVFTISAVSREGLRPLTFALAKMVRDYREAHPKPEPKRQVIRPVKVKDSSFTIEKDPDIPGGFVVRGTRPERWIRQTAFDNDEAVGYLADRLARLGVEDALVKKGAQPGASVTIGDVSFEWEPMTPAGIDLTRTGRGTDPRLDQVERIGADERKHARRVRRGLLDEDA.

The Obg domain maps to 2 to 159 (SRFIDRVVLH…RDLVLELKSV (158 aa)). The OBG-type G domain maps to 160–340 (ADVGLLGFPS…LTFALAKMVR (181 aa)). GTP contacts are provided by residues 166 to 173 (GFPSAGKS), 191 to 195 (FTTLV), 212 to 215 (DVPG), 292 to 295 (NKTD), and 321 to 323 (SAV). S173 and T193 together coordinate Mg(2+). Positions 358–438 (PVKVKDSSFT…IGDVSFEWEP (81 aa)) constitute an OCT domain.

This sequence belongs to the TRAFAC class OBG-HflX-like GTPase superfamily. OBG GTPase family. Monomer. Requires Mg(2+) as cofactor.

The protein resides in the cytoplasm. An essential GTPase which binds GTP, GDP and possibly (p)ppGpp with moderate affinity, with high nucleotide exchange rates and a fairly low GTP hydrolysis rate. Plays a role in control of the cell cycle, stress response, ribosome biogenesis and in those bacteria that undergo differentiation, in morphogenesis control. The protein is GTPase Obg of Rhodococcus erythropolis (strain PR4 / NBRC 100887).